The primary structure comprises 563 residues: Ataxin-10 homolog (563 aa).

Threonine 433 is modified (phosphothreonine). A disordered region spans residues 544–563; that stretch reads VSKEEDPGNENSEIISIDED. Serine 559 is subject to Phosphoserine.

It belongs to the ataxin-10 family.

The protein localises to the cytoplasm. May play a role in the regulation of cytokinesis. The chain is Ataxin-10 homolog (CTR86) from Saccharomyces cerevisiae (strain ATCC 204508 / S288c) (Baker's yeast).